Here is a 168-residue protein sequence, read N- to C-terminus: MGSSKSSKKDKQIHPFGTDVSTFRKLSSKEKKKLDEKELKQYKKLKHKVKKLKKEERERSSIKNTKTLAEDPMVKNVAENDHDQMKNSLSRSQDKGNTDYWLAASLSGGNQRKSKFLKMLGIKNAASITESSPSAQSNKTNDKQREKELEQQYMHGVLHKGTKKGLGM.

Disordered stretches follow at residues methionine 1–aspartate 35, lysine 48–asparagine 97, and alanine 126–methionine 168. A coiled-coil region spans residues lysine 29–lysine 95. The segment covering leucine 68 to methionine 85 has biased composition (basic and acidic residues). Polar residues predominate over residues alanine 126–lysine 139. The span at threonine 140 to glutamate 150 shows a compositional bias: basic and acidic residues. Positions valine 157–methionine 168 are enriched in basic residues.

This is an uncharacterized protein from Schizosaccharomyces pombe (strain 972 / ATCC 24843) (Fission yeast).